We begin with the raw amino-acid sequence, 160 residues long: UPF0262 protein Mrad2831_3513 (160 aa).

Belongs to the UPF0262 family.

In Methylobacterium radiotolerans (strain ATCC 27329 / DSM 1819 / JCM 2831 / NBRC 15690 / NCIMB 10815 / 0-1), this protein is UPF0262 protein Mrad2831_3513.